Consider the following 102-residue polypeptide: MKKPFHHQAGFTLVEMMIVLMIISILLLVALPSMTKNNEVAGDKGCEATVKLLQTQVHAYEIDHDRLPTNLDALKREGYVEHTECPNGKKLTLRNGVVAISE.

Positions 1–10 are cleaved as a propeptide — leader sequence; the sequence is MKKPFHHQAG. Positions 9 to 34 are may be involved in polymerization of ComGC; that stretch reads AGFTLVEMMIVLMIISILLLVALPSM. At Phe-11 the chain carries N-methylphenylalanine. A helical transmembrane segment spans residues 11–31; that stretch reads FTLVEMMIVLMIISILLLVAL. Cys-46 and Cys-85 are oxidised to a cystine.

It belongs to the ComGC family. The transformation pili are flexible filaments, consisting mainly of the major pilin ComGC and smaller amounts of the minor pilins, including at least ComGD, ComGF and ComGG. Homodimer. Forms higher-order multimers. Interacts with ComGG; the interaction is probably direct.

It localises to the cell membrane. Its subcellular location is the cell surface. The protein resides in the fimbrium. Its function is as follows. Major component of the type IV-like pilus (T4P) that plays a role in transformation. Transformation pili are dynamically extended and retracted, perhaps thereby promoting DNA uptake and transformation. Required for transformation. Required for DNA binding. The protein is Competence protein ComGC (comGC) of Halalkalibacterium halodurans (strain ATCC BAA-125 / DSM 18197 / FERM 7344 / JCM 9153 / C-125) (Bacillus halodurans).